The chain runs to 314 residues: DNA-directed RNA polymerase subunit alpha (314 aa).

Positions 1–228 are alpha N-terminal domain (alpha-NTD); the sequence is MIEIEKPKIE…EHLNIFVGLT (228 aa). An alpha C-terminal domain (alpha-CTD) region spans residues 245–314; sequence KEKVMEMTIE…DLGLGLRDDD (70 aa).

Belongs to the RNA polymerase alpha chain family. In terms of assembly, homodimer. The RNAP catalytic core consists of 2 alpha, 1 beta, 1 beta' and 1 omega subunit. When a sigma factor is associated with the core the holoenzyme is formed, which can initiate transcription.

The enzyme catalyses RNA(n) + a ribonucleoside 5'-triphosphate = RNA(n+1) + diphosphate. In terms of biological role, DNA-dependent RNA polymerase catalyzes the transcription of DNA into RNA using the four ribonucleoside triphosphates as substrates. This Oceanobacillus iheyensis (strain DSM 14371 / CIP 107618 / JCM 11309 / KCTC 3954 / HTE831) protein is DNA-directed RNA polymerase subunit alpha.